The sequence spans 1342 residues: DNA-directed RNA polymerase subunit beta (1342 aa).

It belongs to the RNA polymerase beta chain family. In terms of assembly, the RNAP catalytic core consists of 2 alpha, 1 beta, 1 beta' and 1 omega subunit. When a sigma factor is associated with the core the holoenzyme is formed, which can initiate transcription.

The enzyme catalyses RNA(n) + a ribonucleoside 5'-triphosphate = RNA(n+1) + diphosphate. In terms of biological role, DNA-dependent RNA polymerase catalyzes the transcription of DNA into RNA using the four ribonucleoside triphosphates as substrates. This Vibrio parahaemolyticus serotype O3:K6 (strain RIMD 2210633) protein is DNA-directed RNA polymerase subunit beta.